The primary structure comprises 122 residues: Dihydroneopterin aldolase (122 aa).

Residues glutamate 21, tyrosine 53, and 72–73 each bind substrate; that span reads VE. The active-site Proton donor/acceptor is the lysine 98.

It belongs to the DHNA family. As to quaternary structure, homooctamer.

The catalysed reaction is 7,8-dihydroneopterin = 6-hydroxymethyl-7,8-dihydropterin + glycolaldehyde. It carries out the reaction 7,8-dihydroneopterin = 7,8-dihydromonapterin. It participates in cofactor biosynthesis; tetrahydrofolate biosynthesis; 2-amino-4-hydroxy-6-hydroxymethyl-7,8-dihydropteridine diphosphate from 7,8-dihydroneopterin triphosphate: step 3/4. Functionally, catalyzes the conversion of 7,8-dihydroneopterin to 6-hydroxymethyl-7,8-dihydropterin. Can use L-threo-dihydroneopterin and D-erythro-dihydroneopterin as substrates for the formation of 6-hydroxymethyldihydropterin, but it can also catalyze the epimerization of carbon 2' of dihydroneopterin to dihydromonapterin at appreciable velocity. The chain is Dihydroneopterin aldolase (folB) from Escherichia coli O6:H1 (strain CFT073 / ATCC 700928 / UPEC).